A 167-amino-acid chain; its full sequence is Leptin (167 aa).

The N-terminal stretch at methionine 1–alanine 21 is a signal peptide. Cysteine 117 and cysteine 167 are oxidised to a cystine.

It belongs to the leptin family.

Its subcellular location is the secreted. In terms of biological role, key player in the regulation of energy balance and body weight control. Once released into the circulation, has central and peripheral effects by binding LEPR, found in many tissues, which results in the activation of several major signaling pathways. In the hypothalamus, acts as an appetite-regulating factor that induces a decrease in food intake and an increase in energy consumption by inducing anorexinogenic factors and suppressing orexigenic neuropeptides, also regulates bone mass and secretion of hypothalamo-pituitary-adrenal hormones. In the periphery, increases basal metabolism, influences reproductive function, regulates pancreatic beta-cell function and insulin secretion, is pro-angiogenic for endothelial cell and affects innate and adaptive immunity. In the arcuate nucleus of the hypothalamus, activates by depolarization POMC neurons inducing FOS and SOCS3 expression to release anorexigenic peptides and inhibits by hyperpolarization NPY neurons inducing SOCS3 with a consequent reduction on release of orexigenic peptides. In addition to its known satiety inducing effect, has a modulatory role in nutrient absorption. In the intestine, reduces glucose absorption by enterocytes by activating PKC and leading to a sequential activation of p38, PI3K and ERK signaling pathways which exerts an inhibitory effect on glucose absorption. Acts as a growth factor on certain tissues, through the activation of different signaling pathways increases expression of genes involved in cell cycle regulation such as CCND1, via JAK2-STAT3 pathway, or VEGFA, via MAPK1/3 and PI3K-AKT1 pathways. May also play an apoptotic role via JAK2-STAT3 pathway and up-regulation of BIRC5 expression. Pro-angiogenic, has mitogenic activity on vascular endothelial cells and plays a role in matrix remodeling by regulating the expression of matrix metalloproteinases (MMPs) and tissue inhibitors of metalloproteinases (TIMPs). In innate immunity, modulates the activity and function of neutrophils by increasing chemotaxis and the secretion of oxygen radicals. Increases phagocytosis by macrophages and enhances secretion of pro-inflammatory mediators. Increases cytotoxic ability of NK cells. Plays a pro-inflammatory role, in synergy with IL1B, by inducing NOS2 which promotes the production of IL6, IL8 and Prostaglandin E2, through a signaling pathway that involves JAK2, PI3K, MAP2K1/MEK1 and MAPK14/p38. In adaptive immunity, promotes the switch of memory T-cells towards T helper-1 cell immune responses. Increases CD4(+)CD25(-) T-cell proliferation and reduces autophagy during TCR (T-cell receptor) stimulation, through MTOR signaling pathway activation and BCL2 up-regulation. In Phoca vitulina (Harbor seal), this protein is Leptin (LEP).